The primary structure comprises 579 residues: Protein alan shepard (579 aa).

Pro residues predominate over residues 1–12; it reads MHPRYSPAPPPQ. The interval 1 to 66 is disordered; that stretch reads MHPRYSPAPP…GSSSSAAAAP (66 aa). Tyr5 is modified (phosphotyrosine). Low complexity predominate over residues 13 to 24; sequence QQQQMGGPPHQQ. A compositionally biased stretch (gly residues) spans 25-35; it reads QGGGGGGGGSM. Residues 37–54 show a composition bias toward polar residues; that stretch reads GPSNAQQLPPQIPRSQNY. A compositionally biased stretch (low complexity) spans 55 to 66; sequence SNGSSSSAAAAP. 2 positions are modified to phosphotyrosine: Tyr125 and Tyr142. The interval 164–225 is disordered; it reads PATTTYGQRV…TVQNQNQQGG (62 aa). A compositionally biased stretch (low complexity) spans 178 to 225; sequence SPSNTNSSSSSNTGSQSGTLSTSLSNTTNTNTNMGPNGTVQNQNQQGG. RRM domains lie at 231 to 304 and 310 to 389; these read TNLY…MAKQ and TNLY…FADG. Residues 553–579 are disordered; the sequence is MTDSEQASTAASPDEAYTQYPHQAAPK.

Functionally, has a role in the perception of gravity. The chain is Protein alan shepard from Drosophila sechellia (Fruit fly).